Consider the following 368-residue polypeptide: RING finger protein 32 (368 aa).

The segment at 45-82 (RKKEKKSKSLKRDATAIIDTGLRKSTEGPNMEDPEKEY) is disordered. Residues 129 to 171 (CPICKEEFELHPQVLLSCSHVFHRACLQAFEKFTNKKTCPLCR) form an RING-type 1; atypical zinc finger. The IQ domain occupies 188–217 (RVKCATRIQAYWRGYIVRKWYRNLRKIIPP). The segment at 295-358 (CSICLTPLSF…APFHVCPLCR (64 aa)) adopts an RING-type 2; atypical zinc-finger fold.

It localises to the cytoplasm. Its function is as follows. May play a role in sperm formation. This Mus musculus (Mouse) protein is RING finger protein 32 (Rnf32).